The sequence spans 471 residues: Methylenetetrahydrofolate--tRNA-(uracil-5-)-methyltransferase TrmFO (471 aa).

13-18 (GGGLAG) contributes to the FAD binding site.

The protein belongs to the MnmG family. TrmFO subfamily. FAD serves as cofactor.

The protein resides in the cytoplasm. The catalysed reaction is uridine(54) in tRNA + (6R)-5,10-methylene-5,6,7,8-tetrahydrofolate + NADH + H(+) = 5-methyluridine(54) in tRNA + (6S)-5,6,7,8-tetrahydrofolate + NAD(+). The enzyme catalyses uridine(54) in tRNA + (6R)-5,10-methylene-5,6,7,8-tetrahydrofolate + NADPH + H(+) = 5-methyluridine(54) in tRNA + (6S)-5,6,7,8-tetrahydrofolate + NADP(+). In terms of biological role, catalyzes the folate-dependent formation of 5-methyl-uridine at position 54 (M-5-U54) in all tRNAs. The sequence is that of Methylenetetrahydrofolate--tRNA-(uracil-5-)-methyltransferase TrmFO from Azorhizobium caulinodans (strain ATCC 43989 / DSM 5975 / JCM 20966 / LMG 6465 / NBRC 14845 / NCIMB 13405 / ORS 571).